The primary structure comprises 124 residues: Kalata-B1 (124 aa).

Positions 1–22 (MAKFTVCLLLCLLLAAFVGAFG) are cleaved as a signal peptide. Residues 23 to 88 (SELSDSHKTT…QVFLKQLQLK (66 aa)) constitute a propeptide that is removed on maturation. A cross-link (cyclopeptide (Gly-Asn)) is located at residues 89-117 (GLPVCGETCVGGTCNTPGCTCSWPVCTRN). Intrachain disulfides connect cysteine 93–cysteine 107, cysteine 97–cysteine 109, and cysteine 102–cysteine 114. The propeptide occupies 118–124 (GLPSLAA).

Belongs to the cyclotide family. Moebius subfamily. Post-translationally, kalata-B1 is a cyclic peptide which occurs in three forms: with unmodified Trp-111, with Trp-111 oxidized to form oxindolylalanine and with Trp-111 oxidized to form N-formylkynurenine. Oxidation is enhanced by exposure to sunlight. Leaves and stems. Lower in roots.

Probably participates in a plant defense mechanism. Has antibiotic activity. Has a diuretic effect. Has a uterotonic effect in humans. Active against the Gram-positive S.aureus with a minimum inhibition concentration of approximately 0.2 microM. Relatively ineffective against Gram-negative bacteria such as E.coli and P.aeruginosa. Inhibitory effect on the growth and development of larvae from H.punctigera. The unmodified form has hemolytic activity, the oxidized form lacks hemolytic activity. If the protein is linearized, hemolytic activity is lost. In Oldenlandia affinis, this protein is Kalata-B1 (OAK1).